Consider the following 161-residue polypeptide: Arachidonate 5-lipoxygenase-activating protein (161 aa).

Topologically, residues 1–8 (MDQEAVGN) are lumenal. Residues 9–30 (VVLLALVTLISVVQNAFFAHKV) traverse the membrane as a helical segment. The Cytoplasmic segment spans residues 31 to 52 (EHESKAHNGRSFQRTGTLAFER). The chain crosses the membrane as a helical span at residues 53–77 (VYTANQNCVDAYPTFLVVLWTAGLL). Residues 78 to 80 (CSQ) lie on the Lumenal side of the membrane. A helical transmembrane segment spans residues 81 to 102 (VPAAFAGLMYLFVRQKYFVGYL). Topologically, residues 103–107 (GERTQ) are cytoplasmic. Residues 108–115 (STPGYIFG) lie within the membrane without spanning it. A helical transmembrane segment spans residues 116 to 128 (KRIILFLFLMSFA). Residues 129-161 (GILNHYLIFFFGSDFENYIRTVSTTISPLLLIP) lie on the Lumenal side of the membrane.

It belongs to the MAPEG family. As to quaternary structure, homotrimer. Interacts with LTC4S and ALOX5.

It localises to the nucleus membrane. The protein resides in the endoplasmic reticulum membrane. Required for leukotriene biosynthesis by ALOX5 (5-lipoxygenase). Anchors ALOX5 to the membrane. Binds arachidonic acid, and could play an essential role in the transfer of arachidonic acid to ALOX5. Binds to MK-886, a compound that blocks the biosynthesis of leukotrienes. The chain is Arachidonate 5-lipoxygenase-activating protein (Alox5ap) from Mus musculus (Mouse).